Consider the following 122-residue polypeptide: Small ribosomal subunit protein uS13 (122 aa).

The disordered stretch occupies residues 94 to 122 (KGLPVRGQRTHTNARTRKGPRRAIAGKKK).

Belongs to the universal ribosomal protein uS13 family. Part of the 30S ribosomal subunit. Forms a loose heterodimer with protein S19. Forms two bridges to the 50S subunit in the 70S ribosome.

Functionally, located at the top of the head of the 30S subunit, it contacts several helices of the 16S rRNA. In the 70S ribosome it contacts the 23S rRNA (bridge B1a) and protein L5 of the 50S subunit (bridge B1b), connecting the 2 subunits; these bridges are implicated in subunit movement. Contacts the tRNAs in the A and P-sites. This is Small ribosomal subunit protein uS13 from Syntrophus aciditrophicus (strain SB).